Reading from the N-terminus, the 161-residue chain is Nucleotide-binding protein Tcr_1902 (161 aa).

The protein belongs to the YajQ family.

Functionally, nucleotide-binding protein. In Hydrogenovibrio crunogenus (strain DSM 25203 / XCL-2) (Thiomicrospira crunogena), this protein is Nucleotide-binding protein Tcr_1902.